A 318-amino-acid chain; its full sequence is Leucine-rich repeat domain-containing protein YddK (318 aa).

LRR repeat units lie at residues asparagine 109–aspartate 129, arginine 130–asparagine 151, serine 153–serine 173, serine 174–glutamate 194, tryptophan 195–glutamate 216, leucine 217–asparagine 237, leucine 238–phenylalanine 258, asparagine 260–threonine 280, and serine 284–aspartate 305.

The chain is Leucine-rich repeat domain-containing protein YddK (yddK) from Escherichia coli (strain K12).